The primary structure comprises 286 residues: MTAQTIDGKAIAQSIRTQLKEKVTARKEAGKRVPGLAVILVGADPASQVYVGSKRRACEEVGFLSRSYDLESSTTEEQLLSLIDECNQDPAIDGILVQLPLPEHIEESKVIERIRPDKDVDGFHPYNVGRLAQRIPVLRSCTPMGIMTLIKSTGVDTYGLDALVVGASNIVGRPMSLELLLAGCTTTTCHRFTRNLEQKVRQADLVVVAVGKPGFIPGEWIKPGALVIDVGINRLEDGSLVGDVQYDVAAQNASFITPVPGGVGPMTIASLLENTLYAAEQYHDEA.

NADP(+) is bound by residues glycine 166–serine 168 and isoleucine 232.

This sequence belongs to the tetrahydrofolate dehydrogenase/cyclohydrolase family. As to quaternary structure, homodimer.

It catalyses the reaction (6R)-5,10-methylene-5,6,7,8-tetrahydrofolate + NADP(+) = (6R)-5,10-methenyltetrahydrofolate + NADPH. It carries out the reaction (6R)-5,10-methenyltetrahydrofolate + H2O = (6R)-10-formyltetrahydrofolate + H(+). It participates in one-carbon metabolism; tetrahydrofolate interconversion. In terms of biological role, catalyzes the oxidation of 5,10-methylenetetrahydrofolate to 5,10-methenyltetrahydrofolate and then the hydrolysis of 5,10-methenyltetrahydrofolate to 10-formyltetrahydrofolate. This chain is Bifunctional protein FolD, found in Shewanella woodyi (strain ATCC 51908 / MS32).